Reading from the N-terminus, the 285-residue chain is Bifunctional protein FolD (285 aa).

NADP(+) contacts are provided by residues 166–168 (GAS) and Ile-232.

The protein belongs to the tetrahydrofolate dehydrogenase/cyclohydrolase family. Homodimer.

The catalysed reaction is (6R)-5,10-methylene-5,6,7,8-tetrahydrofolate + NADP(+) = (6R)-5,10-methenyltetrahydrofolate + NADPH. It catalyses the reaction (6R)-5,10-methenyltetrahydrofolate + H2O = (6R)-10-formyltetrahydrofolate + H(+). It functions in the pathway one-carbon metabolism; tetrahydrofolate interconversion. Catalyzes the oxidation of 5,10-methylenetetrahydrofolate to 5,10-methenyltetrahydrofolate and then the hydrolysis of 5,10-methenyltetrahydrofolate to 10-formyltetrahydrofolate. This is Bifunctional protein FolD from Vibrio atlanticus (strain LGP32) (Vibrio splendidus (strain Mel32)).